The primary structure comprises 117 residues: MDLIQQLEQEEIARLNKVIPVFAPGDTVIVSVNVVEGTRKRLQAYEGVVIAKRNRGLNSSFIVRKISSGEGVERTFQLYSPLIASIEVKRRGDVRRAKLYYLRQRSGKSARIKEKLS.

It belongs to the bacterial ribosomal protein bL19 family.

Its function is as follows. This protein is located at the 30S-50S ribosomal subunit interface and may play a role in the structure and function of the aminoacyl-tRNA binding site. The polypeptide is Large ribosomal subunit protein bL19 (Leptothrix cholodnii (strain ATCC 51168 / LMG 8142 / SP-6) (Leptothrix discophora (strain SP-6))).